The chain runs to 361 residues: Peptide chain release factor 1 (361 aa).

Residue Gln-237 is modified to N5-methylglutamine. The segment at 286–306 (AKQDQEQAAKRKSLVGSGDRS) is disordered.

This sequence belongs to the prokaryotic/mitochondrial release factor family. In terms of processing, methylated by PrmC. Methylation increases the termination efficiency of RF1.

Its subcellular location is the cytoplasm. Its function is as follows. Peptide chain release factor 1 directs the termination of translation in response to the peptide chain termination codons UAG and UAA. This is Peptide chain release factor 1 from Coxiella burnetii (strain CbuK_Q154) (Coxiella burnetii (strain Q154)).